We begin with the raw amino-acid sequence, 321 residues long: Electron transfer flavoprotein subunit alpha (321 aa).

FAD is bound by residues arginine 211, serine 236, arginine 237, glutamine 250, valine 251, serine 254, glycine 255, serine 270, serine 272, glutamine 274, histidine 275, asparagine 289, aspartate 307, and isoleucine 308.

As to quaternary structure, heterodimer of an alpha and a beta subunit. Forms a ternary complex with trimethylamine dehydrogenase. FAD serves as cofactor.

Functionally, heterodimeric electron transfer flavoprotein that accepts electrons from trimethylamine dehydrogenase. It transfers the electrons to the main respiratory chain via ETF-ubiquinone oxidoreductase (ETF dehydrogenase). The polypeptide is Electron transfer flavoprotein subunit alpha (etfA) (Methylophilus methylotrophus (Bacterium W3A1)).